The chain runs to 221 residues: Histone H1.3 (221 aa).

The segment covering 1 to 17 (MSETAPVAPAAPAPAEK) has biased composition (low complexity). Residues 1-42 (MSETAPVAPAAPAPAEKTPVKKKAKKSGVAAGKRKASGPPVS) form a disordered region. Serine 2 is modified (N-acetylserine). At serine 2 the chain carries Phosphoserine. Lysine 17 bears the N6-acetyllysine mark. Residue threonine 18 is modified to Phosphothreonine. The span at 20–36 (VKKKAKKSGVAAGKRKA) shows a compositional bias: basic residues. Lysine 35 and lysine 53 each carry N6-(beta-hydroxybutyryl)lysine. Residues 37–110 (SGPPVSELIT…GASGSFKLNK (74 aa)) form the H15 domain. Citrulline is present on arginine 55. 3 positions are modified to N6-(beta-hydroxybutyryl)lysine: lysine 65, lysine 86, and lysine 91. The tract at residues 87–221 (SLVSKGTLVQ…KAKKAVSKKK (135 aa)) is disordered. The residue at position 105 (serine 105) is a Phosphoserine; by PKC. Residue lysine 107 is modified to N6-(beta-hydroxybutyryl)lysine. Basic residues-rich tracts occupy residues 120-141 (KGKK…KPKK), 150-161 (KAAKKTPKKVKK), 170-187 (KVAK…KKPT), and 194-221 (KAPK…SKKK).

It belongs to the histone H1/H5 family. H1 histones are progressively phosphorylated during the cell cycle, becoming maximally phosphorylated during late G2 phase and M phase, and being dephosphorylated sharply thereafter. In terms of processing, citrullination at Arg-55 (H1R54ci) by PADI4 takes place within the DNA-binding site of H1 and results in its displacement from chromatin and global chromatin decondensation, thereby promoting pluripotency and stem cell maintenance.

It is found in the nucleus. The protein resides in the chromosome. Its function is as follows. H1 histones bind to linker DNA between nucleosomes forming the macromolecular structure known as the chromatin fiber. H1 histones are necessary for the condensation of nucleosome chains into higher-order structured fibers. Also acts as a regulator of individual gene transcription through chromatin remodeling, nucleosome spacing and DNA methylation. The protein is Histone H1.3 of Bos taurus (Bovine).